The following is a 131-amino-acid chain: Meiotically up-regulated gene 115 protein (131 aa).

The protein resides in the mitochondrion. It localises to the nucleus. Its function is as follows. Has a role in meiosis. This Schizosaccharomyces pombe (strain 972 / ATCC 24843) (Fission yeast) protein is Meiotically up-regulated gene 115 protein (mug115).